The primary structure comprises 269 residues: Probable molybdenum ABC transporter permease protein HVO_B0370 (269 aa).

6 helical membrane-spanning segments follow: residues 26–46, 69–89, 100–120, 140–160, 198–218, and 243–263; these read LLLA…LVFA, VVAA…LAYW, VILA…GMLL, SLFG…VVTA, ILAG…ATLM, and FPVA…VHAL. The ABC transmembrane type-1 domain maps to 65 to 258; it reads ATNSVVAATL…LVGIAVGAIL (194 aa).

Belongs to the binding-protein-dependent transport system permease family. As to quaternary structure, the complex is composed of two ATP-binding proteins, two transmembrane proteins (HVO_B0370) and a solute-binding protein (HVO_B0369).

The protein localises to the cell membrane. Its function is as follows. Part of an ABC transporter complex involved in molybdenum import. Responsible for the translocation of the substrate across the membrane. This Haloferax volcanii (strain ATCC 29605 / DSM 3757 / JCM 8879 / NBRC 14742 / NCIMB 2012 / VKM B-1768 / DS2) (Halobacterium volcanii) protein is Probable molybdenum ABC transporter permease protein HVO_B0370.